The primary structure comprises 72 residues: uncharacterized protein (72 aa).

The chain crosses the membrane as a helical span at residues 33 to 53 (VCIFFSLIFFFFFFFFCVNWG).

The protein localises to the membrane. This is an uncharacterized protein from Dictyostelium discoideum (Social amoeba).